Consider the following 274-residue polypeptide: Glutamate--cysteine ligase regulatory subunit (274 aa).

Serine 59 bears the Phosphoserine mark. Lysine 263 is subject to N6-acetyllysine.

This sequence belongs to the aldo/keto reductase family. Glutamate--cysteine ligase light chain subfamily. Heterodimer of a catalytic heavy chain and a regulatory light chain.

Its pathway is sulfur metabolism; glutathione biosynthesis; glutathione from L-cysteine and L-glutamate: step 1/2. The sequence is that of Glutamate--cysteine ligase regulatory subunit (GCLM) from Bos taurus (Bovine).